A 337-amino-acid chain; its full sequence is MAIETLYDSDADLTIIQGRKVAIIGYGSQGHAHAMNLRDSGVEVAIGLREGSKSREKAEEAGFKVLTNAEAAKWADVIMLLAPDTSQAAIFTEDIEPNLEDGNALFFGHGLNIHFGLIKPAENITIGMVAPKGPGHLVRRQFVDGKGVPCLIATEQDPKGEGRELTLSYAAAIGGARAGVIPTTFKDETETDLFGEQAVLCGGVEYLIMNGFEVLTEAGYEPEMAYFEVCHELKLIVDLIVEGGIKNMNYSCSDTAEFGGYLSGPRVIDASVKERMKDVLTDIQDGTFVKRLVANVEGGNKELEDLRAKVNSHPIEQTGSQLRDLMSWVKNPLDATA.

The KARI N-terminal Rossmann domain maps to 1–183 (MAIETLYDSD…GGARAGVIPT (183 aa)). Residues 26–29 (YGSQ), Arg49, Ser52, Ser54, and 84–87 (DTSQ) contribute to the NADP(+) site. His109 is an active-site residue. Residue Gly135 coordinates NADP(+). In terms of domain architecture, KARI C-terminal knotted spans 184 to 329 (TFKDETETDL…SQLRDLMSWV (146 aa)). The Mg(2+) site is built by Asp192, Glu196, Glu228, and Glu232. Ser253 provides a ligand contact to substrate.

This sequence belongs to the ketol-acid reductoisomerase family. Mg(2+) serves as cofactor.

It catalyses the reaction (2R)-2,3-dihydroxy-3-methylbutanoate + NADP(+) = (2S)-2-acetolactate + NADPH + H(+). The enzyme catalyses (2R,3R)-2,3-dihydroxy-3-methylpentanoate + NADP(+) = (S)-2-ethyl-2-hydroxy-3-oxobutanoate + NADPH + H(+). It participates in amino-acid biosynthesis; L-isoleucine biosynthesis; L-isoleucine from 2-oxobutanoate: step 2/4. Its pathway is amino-acid biosynthesis; L-valine biosynthesis; L-valine from pyruvate: step 2/4. In terms of biological role, involved in the biosynthesis of branched-chain amino acids (BCAA). Catalyzes an alkyl-migration followed by a ketol-acid reduction of (S)-2-acetolactate (S2AL) to yield (R)-2,3-dihydroxy-isovalerate. In the isomerase reaction, S2AL is rearranged via a Mg-dependent methyl migration to produce 3-hydroxy-3-methyl-2-ketobutyrate (HMKB). In the reductase reaction, this 2-ketoacid undergoes a metal-dependent reduction by NADPH to yield (R)-2,3-dihydroxy-isovalerate. This chain is Ketol-acid reductoisomerase (NADP(+)), found in Corynebacterium aurimucosum (strain ATCC 700975 / DSM 44827 / CIP 107346 / CN-1) (Corynebacterium nigricans).